Reading from the N-terminus, the 173-residue chain is MPAPQKDGPRANRDIRGVREVQLIDETGQNRGVMGFFDALQVAEEAGLDLVEIAPNSTPPVCKLLDYGRYRFNEQKKQAEARKRQKTVEVKEIKLRPGIDKHDYDVKMKAVQRFFEEGDKVKVTLRFRGREMAHQDLGLRLLERVKAETQEIAKVESEPQLEGRQMIMILAPR.

It belongs to the IF-3 family. In terms of assembly, monomer.

It is found in the cytoplasm. Its function is as follows. IF-3 binds to the 30S ribosomal subunit and shifts the equilibrium between 70S ribosomes and their 50S and 30S subunits in favor of the free subunits, thus enhancing the availability of 30S subunits on which protein synthesis initiation begins. The chain is Translation initiation factor IF-3 from Methylobacterium sp. (strain 4-46).